A 238-amino-acid chain; its full sequence is Pyridoxine 5'-phosphate synthase (238 aa).

Asn7 contacts 3-amino-2-oxopropyl phosphate. 9 to 10 provides a ligand contact to 1-deoxy-D-xylulose 5-phosphate; that stretch reads DH. Arg18 contacts 3-amino-2-oxopropyl phosphate. His43 acts as the Proton acceptor in catalysis. 1-deoxy-D-xylulose 5-phosphate is bound by residues Arg45 and His50. Glu70 acts as the Proton acceptor in catalysis. Thr100 contributes to the 1-deoxy-D-xylulose 5-phosphate binding site. His190 (proton donor) is an active-site residue. 3-amino-2-oxopropyl phosphate-binding positions include Gly191 and 212–213; that span reads GH.

The protein belongs to the PNP synthase family. In terms of assembly, homooctamer; tetramer of dimers.

Its subcellular location is the cytoplasm. The catalysed reaction is 3-amino-2-oxopropyl phosphate + 1-deoxy-D-xylulose 5-phosphate = pyridoxine 5'-phosphate + phosphate + 2 H2O + H(+). It functions in the pathway cofactor biosynthesis; pyridoxine 5'-phosphate biosynthesis; pyridoxine 5'-phosphate from D-erythrose 4-phosphate: step 5/5. Catalyzes the complicated ring closure reaction between the two acyclic compounds 1-deoxy-D-xylulose-5-phosphate (DXP) and 3-amino-2-oxopropyl phosphate (1-amino-acetone-3-phosphate or AAP) to form pyridoxine 5'-phosphate (PNP) and inorganic phosphate. This chain is Pyridoxine 5'-phosphate synthase, found in Prochlorococcus marinus (strain MIT 9515).